The following is a 240-amino-acid chain: Nicotinamide riboside kinase (240 aa).

An ATP-binding site is contributed by 13–21; that stretch reads GCSSSGKTT. The Mg(2+) site is built by T20 and D39. The Proton acceptor role is filled by D39. Residues 39-42 and 59-60 each bind substrate; these read DDFY and WD. R158 lines the ATP pocket. Substrate-binding positions include R159 and 164-165; that span reads GY. ATP contacts are provided by residues 162–164 and 208–210; these read RKG and KSK.

Belongs to the uridine kinase family. NRK subfamily.

It carries out the reaction beta-nicotinamide D-riboside + ATP = beta-nicotinamide D-ribonucleotide + ADP + H(+). It catalyses the reaction beta-D-ribosylnicotinate + ATP = nicotinate beta-D-ribonucleotide + ADP + H(+). It participates in cofactor biosynthesis; NAD(+) biosynthesis. In terms of biological role, catalyzes the phosphorylation of nicotinamide riboside (NR) and nicotinic acid riboside (NaR) to form nicotinamide mononucleotide (NMN) and nicotinic acid mononucleotide (NaMN). The polypeptide is Nicotinamide riboside kinase (NRK1) (Saccharomyces cerevisiae (strain ATCC 204508 / S288c) (Baker's yeast)).